A 202-amino-acid chain; its full sequence is Protein N-terminal glutamine amidohydrolase (202 aa).

Residues Cys27, His80, and Asp96 contribute to the active site.

Belongs to the NTAQ1 family. In terms of assembly, monomer.

It localises to the cytoplasm. Its subcellular location is the cytosol. The protein localises to the nucleus. The enzyme catalyses N-terminal L-glutaminyl-[protein] + H2O = N-terminal L-glutamyl-[protein] + NH4(+). Mediates the side-chain deamidation of N-terminal glutamine residues to glutamate, an important step in N-end rule pathway of protein degradation. Conversion of the resulting N-terminal glutamine to glutamate renders the protein susceptible to arginylation, polyubiquitination and degradation as specified by the N-end rule. Does not act on substrates with internal or C-terminal glutamine and does not act on non-glutamine residues in any position. Does not deaminate acetylated N-terminal glutamine. With the exception of proline, all tested second-position residues on substrate peptides do not greatly influence the activity. In contrast, a proline at position 2, virtually abolishes deamidation of N-terminal glutamine. The sequence is that of Protein N-terminal glutamine amidohydrolase (ntaq1) from Danio rerio (Zebrafish).